We begin with the raw amino-acid sequence, 417 residues long: D-amino acid dehydrogenase (417 aa).

Residue 3–17 coordinates FAD; sequence AVVLGSGVVGLMSAW.

It belongs to the DadA oxidoreductase family. FAD serves as cofactor.

The catalysed reaction is a D-alpha-amino acid + A + H2O = a 2-oxocarboxylate + AH2 + NH4(+). Oxidative deamination of D-amino acids. The sequence is that of D-amino acid dehydrogenase from Vibrio vulnificus (strain YJ016).